The chain runs to 678 residues: ATP-dependent RNA helicase DHX58 (678 aa).

Residues 11–188 (IMPALEGKNI…DGAINHVLQL (178 aa)) enclose the Helicase ATP-binding domain. 24 to 31 (LPTGAGKT) contributes to the ATP binding site. The DECH box signature appears at 131 to 134 (DECH). The region spanning 350–514 (KLEMLEKILQ…QAVAAVQKMD (165 aa)) is the Helicase C-terminal domain. A coiled-coil region spans residues 489–546 (ELKRELINEALETLMEQAVAAVQKMDQAEYQAKIRDLQQAALTKRAAQAAQRENQRQQ). Positions 539 to 669 (QRENQRQQFP…PDFDFLQHCA (131 aa)) constitute an RLR CTR domain. Zn(2+) contacts are provided by C556, C559, C612, and C615. Residues 572-655 (VEGTHHVNVN…RIQAKKWSRV (84 aa)) form an RNA-binding region.

Belongs to the helicase family. RLR subfamily. In terms of assembly, monomer in the absence of dsRNA. Homodimer in the presence of dsRNA. Interacts with RIGI (via CARD domain), MAVS/IPS1 and DDX60. Found in a complex with RIGI and IFIH1/MDA5. Interacts with ANKRD17. Directly interacts with ATG5 and ATG12, either as ATG5 and ATG12 monomers or as ATG12-ATG5 conjugates. (Microbial infection) Interacts (via helicase C-terminal domain) with non-structural protein V of paramyxoviruses including human parainfluenza 2 virus, human parainfluenza 5 virus, measles virus, mumps virus, hendra virus and nipah virus. As to expression, expressed in testis, nerve and spleen. Also expressed in the brain.

The protein resides in the cytoplasm. The catalysed reaction is ATP + H2O = ADP + phosphate + H(+). In terms of biological role, acts as a regulator of RIGI and IFIH1/MDA5 mediated antiviral signaling. Cannot initiate antiviral signaling as it lacks the CARD domain required for activating MAVS/IPS1-dependent signaling events. Can have both negative and positive regulatory functions related to RIGI and IFIH1/MDA5 signaling and this role in regulating signaling may be complex and could probably depend on characteristics of the infecting virus or target cells, or both. Its inhibitory action on RIG-I signaling may involve the following mechanisms: competition with RIGI for binding to the viral RNA, binding to RIGI and inhibiting its dimerization and interaction with MAVS/IPS1, competing with IKBKE in its binding to MAVS/IPS1 thereby inhibiting activation of interferon regulatory factor 3 (IRF3). Its positive regulatory role may involve unwinding or stripping nucleoproteins of viral RNA thereby facilitating their recognition by RIGI and IFIH1/MDA5. Involved in the innate immune response to various RNA viruses and some DNA viruses such as poxviruses and coronavirus SARS-CoV-2, and also to the bacterial pathogen Listeria monocytogenes. Can bind both ssRNA and dsRNA, with a higher affinity for dsRNA. Shows a preference to 5'-triphosphorylated RNA, although it can recognize RNA lacking a 5'-triphosphate. This Homo sapiens (Human) protein is ATP-dependent RNA helicase DHX58.